Consider the following 330-residue polypeptide: Interleukin-12 subunit beta (330 aa).

The N-terminal stretch at 1–22 is a signal peptide; sequence MHPQQLVVSWFSLVLLASPIMA. An Ig-like C2-type domain is found at 23–106; sequence IWELEKNVYV…LSHSLLLLHK (84 aa). A disulfide bridge links Cys-50 with Cys-90. N-linked (GlcNAc...) asparagine glycosylation is found at Asn-136 and Asn-224. Positions 239–330 constitute a Fibronectin type-III domain; that stretch reads PPKNLQLKPL…WSEWASVSCS (92 aa).

It belongs to the IL-12B family. In terms of assembly, heterodimer with IL12A; disulfide-linked. The heterodimer is known as interleukin IL-12. Heterodimer with IL23A; disulfide-linked. The heterodimer is known as interleukin IL-23. Also secreted as a monomer. Interacts with NBR1; this interaction promotes IL-12 secretion.

It is found in the secreted. Its function is as follows. Cytokine that can act as a growth factor for activated T and NK cells, enhance the lytic activity of NK/lymphokine-activated killer cells, and stimulate the production of IFN-gamma by resting PBMC. Associates with IL23A to form the IL-23 interleukin, a heterodimeric cytokine which functions in innate and adaptive immunity. IL-23 may constitute with IL-17 an acute response to infection in peripheral tissues. IL-23 binds to a heterodimeric receptor complex composed of IL12RB1 and IL23R, activates the Jak-Stat signaling cascade, stimulates memory rather than naive T-cells and promotes production of pro-inflammatory cytokines. IL-23 induces autoimmune inflammation and thus may be responsible for autoimmune inflammatory diseases and may be important for tumorigenesis. The polypeptide is Interleukin-12 subunit beta (IL12B) (Lama glama (Llama)).